Reading from the N-terminus, the 568-residue chain is 2-succinyl-5-enolpyruvyl-6-hydroxy-3-cyclohexene-1-carboxylate synthase (568 aa).

Belongs to the TPP enzyme family. MenD subfamily. In terms of assembly, homodimer. Mg(2+) is required as a cofactor. The cofactor is Mn(2+). Thiamine diphosphate serves as cofactor.

The enzyme catalyses isochorismate + 2-oxoglutarate + H(+) = 5-enolpyruvoyl-6-hydroxy-2-succinyl-cyclohex-3-ene-1-carboxylate + CO2. The protein operates within quinol/quinone metabolism; 1,4-dihydroxy-2-naphthoate biosynthesis; 1,4-dihydroxy-2-naphthoate from chorismate: step 2/7. It functions in the pathway quinol/quinone metabolism; menaquinone biosynthesis. In terms of biological role, catalyzes the thiamine diphosphate-dependent decarboxylation of 2-oxoglutarate and the subsequent addition of the resulting succinic semialdehyde-thiamine pyrophosphate anion to isochorismate to yield 2-succinyl-5-enolpyruvyl-6-hydroxy-3-cyclohexene-1-carboxylate (SEPHCHC). This chain is 2-succinyl-5-enolpyruvyl-6-hydroxy-3-cyclohexene-1-carboxylate synthase, found in Haemophilus influenzae (strain 86-028NP).